The primary structure comprises 488 residues: Serine/threonine-protein kinase haspin homolog hrk1 (488 aa).

In terms of domain architecture, Protein kinase spans Thr156–Tyr488. ATP contacts are provided by residues Ile162–Val170 and Lys184. The Proton acceptor role is filled by Asp305.

This sequence belongs to the protein kinase superfamily. Ser/Thr protein kinase family. Haspin subfamily. In terms of assembly, interacts with pds5 and swi6.

Its subcellular location is the cytoplasm. The protein resides in the chromosome. The enzyme catalyses L-seryl-[protein] + ATP = O-phospho-L-seryl-[protein] + ADP + H(+). It catalyses the reaction L-threonyl-[protein] + ATP = O-phospho-L-threonyl-[protein] + ADP + H(+). Serine/threonine haspin-like protein kinase involved in cell cycle regulation. Acts in chromosomal passenger complex (CPC) targeting to centromeres by phosphorylating histone H3 at 'Thr3' (H3T3ph). The chain is Serine/threonine-protein kinase haspin homolog hrk1 (hrk1) from Schizosaccharomyces pombe (strain 972 / ATCC 24843) (Fission yeast).